A 585-amino-acid polypeptide reads, in one-letter code: MASPGSGFWSFGSEDGSGDPENPSTARAWCQVAQKFTGGIGNKLCALLYGDAEKPAESGGSEPPRATSRKAACACNQKPCSCPKAEVNYAFLHATDLLPACDGERPTLAFLQDVMDILLQYVVKSFDRSTKVIDFHYPNELLQEYNWELADQPQNLEEILMHCQTTLKYAIKTGHPRYFNQLSTGLDMVGLAADWLTSTANTNMFTYEIAPVFVLLEYVTLKKMREIIGWPGGSGDGIFSPGGAISNMYAMLIARFKMFPEVKEKGMAAVPRLIAFTSEHSHFSLKKGAAALGIGTDSVILIKCDERGKMVPSDLERRILEAKQKGFVPFLVSATAGTTVYGAFDPLLAVADICKKYKIWMHVDAAWGGGLLMSRKHKWKLSGVERANSVTWNPHKMMGVPLQCSALLVREEGLMQSCNQMHASYLFQQDKHYDLSYDTGDKALQCGRHVDVFKLWLMWRAKGTTGFEAHIDKCLELAEYLYSIIKNREGYEMVFDGKPQHTNVCFWYVPPSLRVLEDNEERMNRLSKVAPVIKARMMEYGTTMVSYQPLGDKVNFFRMVISNPAATHQDIDFLIEEIERLGQDL.

The interval 1–25 (MASPGSGFWSFGSEDGSGDPENPST) is disordered. Phosphoserine is present on residues Ser-3, Ser-6, Ser-10, and Ser-13. S-palmitoyl cysteine attachment occurs at residues Cys-30 and Cys-45. Residue 181–183 (QLS) participates in substrate binding. An N6-(pyridoxal phosphate)lysine modification is found at Lys-396. Arg-558 is a binding site for substrate.

The protein belongs to the group II decarboxylase family. In terms of assembly, homodimer. It depends on pyridoxal 5'-phosphate as a cofactor. Post-translationally, phosphorylated; which does not affect kinetic parameters or subcellular location. Palmitoylated; which is required for presynaptic clustering.

The protein localises to the cytoplasm. Its subcellular location is the cytosol. It is found in the cytoplasmic vesicle. It localises to the presynaptic cell membrane. The protein resides in the golgi apparatus membrane. It catalyses the reaction L-glutamate + H(+) = 4-aminobutanoate + CO2. Functionally, catalyzes the production of GABA. In Canis lupus familiaris (Dog), this protein is Glutamate decarboxylase 2 (GAD2).